Consider the following 470-residue polypeptide: ATP synthase subunit beta 2 (470 aa).

G155–T162 provides a ligand contact to ATP.

The protein belongs to the ATPase alpha/beta chains family. F-type ATPases have 2 components, CF(1) - the catalytic core - and CF(0) - the membrane proton channel. CF(1) has five subunits: alpha(3), beta(3), gamma(1), delta(1), epsilon(1). CF(0) has three main subunits: a(1), b(2) and c(9-12). The alpha and beta chains form an alternating ring which encloses part of the gamma chain. CF(1) is attached to CF(0) by a central stalk formed by the gamma and epsilon chains, while a peripheral stalk is formed by the delta and b chains.

Its subcellular location is the cell inner membrane. It catalyses the reaction ATP + H2O + 4 H(+)(in) = ADP + phosphate + 5 H(+)(out). Functionally, produces ATP from ADP in the presence of a proton gradient across the membrane. The catalytic sites are hosted primarily by the beta subunits. This chain is ATP synthase subunit beta 2, found in Nitrosospira multiformis (strain ATCC 25196 / NCIMB 11849 / C 71).